A 160-amino-acid chain; its full sequence is Small ribosomal subunit protein bS6 (160 aa).

This sequence belongs to the bacterial ribosomal protein bS6 family.

Binds together with bS18 to 16S ribosomal RNA. The sequence is that of Small ribosomal subunit protein bS6 from Ureaplasma parvum serovar 3 (strain ATCC 27815 / 27 / NCTC 11736).